Reading from the N-terminus, the 887-residue chain is Dystrophin-like protein 1 (887 aa).

Positions 30 to 197 constitute a PID domain; the sequence is YQHGIHFEAK…KISMQSEDEA (168 aa). 2 stretches are compositionally biased toward basic and acidic residues: residues 176–186 and 205–216; these read MQEKHEDEAAK and IEERGGREEDSR. 5 disordered regions span residues 176-254, 506-606, 641-753, 804-839, and 853-887; these read MQEK…GTAI, EIHH…QYER, QFDM…KNTA, IAEEPEPSEMDPNRNNLPSSTNSSMKRRGFLPPPNT, and NVDRSKLPETSLLTRLTRQAQGDNSLGNLPNGYPQ. The segment covering 242-254 has biased composition (polar residues); the sequence is KPSTTSSSGGTAI. A coiled-coil region spans residues 434–506; that stretch reads QLMRSQLDQA…QMLETKITSE (73 aa). A compositionally biased stretch (low complexity) spans 510 to 519; the sequence is SSSQPPQHQP. Positions 573-588 are enriched in basic and acidic residues; the sequence is KESKERRKDEGTRTEP. Polar residues predominate over residues 597 to 606; it reads DYSSSDQYER. Composition is skewed to polar residues over residues 816–827 and 863–887; these read NRNNLPSSTNSS and SLLTRLTRQAQGDNSLGNLPNGYPQ.

As to quaternary structure, component of the dystrophin glycoprotein complex (DGC). Interacts with zyx-1. In terms of tissue distribution, expressed in muscles of the head, body wall and vulva. In some animals, weaker expression is observed in the intestinal muscles (at protein level). Isoform a is expressed in lateral neurons SDQL and SDQR.

In terms of biological role, together with dys-1 and hlh-1, participates in a common muscular function. This is Dystrophin-like protein 1 from Caenorhabditis elegans.